The chain runs to 426 residues: Serine protease HTRA2, mitochondrial (426 aa).

The N-terminal 30 residues, 1-30 (MALRGSHRLDDFIRRCSALTLFHSQAPSRR), are a transit peptide targeting the mitochondrion. A disordered region spans residues 30-59 (RVSHCGRDRRQQQDPPGQGRQEQQESGGGH). The propeptide occupies 31-78 (VSHCGRDRRQQQDPPGQGRQEQQESGGGHWSRFGWRSLIRFFVPFSLG). The span at 42–54 (QDPPGQGRQEQQE) shows a compositional bias: low complexity. Residues 68–86 (LIRFFVPFSLGAVASSLVI) form a helical membrane-spanning segment. The IAP-binding motif lies at 79-82 (AVAS). Positions 143 to 306 (SNGSGFIIEQ…IPIDYVKVFL (164 aa)) are serine protease. Catalysis depends on charge relay system residues histidine 161, aspartate 193, and serine 270. One can recognise a PDZ domain in the interval 329–414 (MGITMLTLTP…HLDIVILRGV (86 aa)).

This sequence belongs to the peptidase S1C family. In terms of assembly, interacts with th/DIAP1 (via BIR 2 domain).

The protein localises to the mitochondrion intermembrane space. Its subcellular location is the mitochondrion membrane. It catalyses the reaction Cleavage of non-polar aliphatic amino-acids at the P1 position, with a preference for Val, Ile and Met. At the P2 and P3 positions, Arg is selected most strongly with a secondary preference for other hydrophilic residues.. Serine protease that shows proteolytic activity against a non-specific substrate beta-casein. Promotes or induces cell death either by direct binding to and inhibition of BIRC proteins (also called inhibitor of apoptosis proteins, IAPs), leading to an increase in caspase activity, or by a BIRC inhibition-independent, caspase-independent and serine protease activity-dependent mechanism. Can antagonize antiapoptotic activity of th/Diap1 by directly inducing the degradation of th/Diap1. The protein is Serine protease HTRA2, mitochondrial of Drosophila ananassae (Fruit fly).